A 424-amino-acid chain; its full sequence is Galacturonokinase (424 aa).

S2 carries the N-acetylserine modification. 146–155 (DSSGLSSSAA) is an ATP binding site. Residue D197 is the Proton acceptor of the active site.

It belongs to the GHMP kinase family. Mg(2+) serves as cofactor. Requires Mn(2+) as cofactor. It depends on Ca(2+) as a cofactor. In terms of tissue distribution, expressed in roots, stems, leaves, flowers and young siliques. Higher expression in the elongating middle stem region than in the lower or upper stem region.

The catalysed reaction is D-galacturonate + ATP = 1-phospho-alpha-D-galacturonate + ADP + H(+). Its activity is regulated as follows. Inhibited by EDTA and ADP. Functionally, sugar-1-kinase with a strict substrate specificity for the alpha-anomeric configuration of D-galacturonic acid (D-GalA) and ATP. Involved in the biosynthesis of UDP-galacturonic acid (UDP-GalA) from the salvaged GalA that is released during growth-dependent cell wall restructuring. In Arabidopsis thaliana (Mouse-ear cress), this protein is Galacturonokinase (GALAK).